Consider the following 873-residue polypeptide: MHPPPPAAAMDFSQNSLFGYMEDLQELTIIERPVRRSLKTPEEIERLTVDEDLSDIERAVYLLSAGQDVQGTSVIANLPFLMRQNPTETLRRVLPKVREALHVAGVEMQLTAAMSFLTILQDESVSIHAYTHSFLQVILLHLEHRDTGVSNAWLETLLSVIEVLPKETLRHEILNPLVSKAQLSQTVQSRLVSCKILGKLTNKFDAHTIKREILPLVKSLCQDVEYEVRSCMCRQLENIAQGIGTELTKSVVLPELIELSRDEGSSVRLAAFETLVNLLDIFDTDDRSQTILPLVKSFCEKSFKADESILISLSFHLGKLCHGLYGIFTPDQHLRFLEFYKKLCTLGLQQENGHNENQIPPQILEQEKKYISVRKNCAYNFPAMIVFVDPKNFHMELYSTFFCLCHDPEVPVRYTIAICFYEVSKLLNSGVYLIHKELITLLQDESLEVLDALIDHLPEILELMSTGGESSVQENKLSSLPDLIPALTAAEQRAAASLKWRTHEKLLQKYACLPHVISSDQIYYRFLQRMFTIMMTNNVLPVQKAASRTLCIFLRYNRKQEQRHEVIQKLIEQLGQGKSYWNRLRFLDTCEFIIEIFSKSFFCKYFFLPAIELTHDPVANVRMKLCYLLPKVKSTLKIPADKHLLQQLEMCVRKLLCQEKDKDVLAIVKRTVLELDRMEMSMDAFQKKFYEKDLLDQEKEREELLLLEMEQLEKEKQQNDGRPMSDKMFEKKRRDTKTPTQSLPKNIPISVPGPSSVTPSTSKEIKKSKLIRSQSFNNQAFHAKYGNLEKCASKSSTTGYTTSVSGLGKTSVLSLADDSFRTRNASSVPSSFSPNTPLPSTSRGTGNSVDPKSSGSKDTQPRKATLKSRKSNP.

HEAT repeat units follow at residues 213 to 251 (ILPL…TKSV), 252 to 290 (VLPE…RSQT), and 392 to 427 (NFHM…SKLL). Residues 686–720 (QKKFYEKDLLDQEKEREELLLLEMEQLEKEKQQND) adopt a coiled-coil conformation. A compositionally biased stretch (basic and acidic residues) spans 713 to 737 (EKEKQQNDGRPMSDKMFEKKRRDTK). A disordered region spans residues 713–766 (EKEKQQNDGRPMSDKMFEKKRRDTKTPTQSLPKNIPISVPGPSSVTPSTSKEIK). Over residues 747 to 762 (IPISVPGPSSVTPSTS) the composition is skewed to low complexity. Ser-775 bears the Phosphoserine mark. Thr-797 carries the phosphothreonine modification. Over residues 822-858 (TRNASSVPSSFSPNTPLPSTSRGTGNSVDPKSSGSKD) the composition is skewed to polar residues. The tract at residues 822-873 (TRNASSVPSSFSPNTPLPSTSRGTGNSVDPKSSGSKDTQPRKATLKSRKSNP) is disordered. The segment covering 864-873 (ATLKSRKSNP) has biased composition (basic residues).

In terms of assembly, serine/threonine-protein phosphatase 4 (PP4) occurs in different assemblies of the catalytic and one or more regulatory subunits. Component of the PP4 complex PPP4C-PPP4R4.

It is found in the cytoplasm. Functionally, putative regulatory subunit of serine/threonine-protein phosphatase 4. The sequence is that of Serine/threonine-protein phosphatase 4 regulatory subunit 4 (PPP4R4) from Homo sapiens (Human).